The primary structure comprises 767 residues: DNA topoisomerase 1 (767 aa).

Basic and acidic residues predominate over residues 1–23 (MSGDHLHNDSQIEADFRLNDSHK). The segment at 1–200 (MSGDHLHNDS…DNKKKKAKKE (200 aa)) is disordered. Ser2 carries the post-translational modification N-acetylserine. Residues Ser2 and Ser10 each carry the phosphoserine modification. A compositionally biased stretch (basic residues) spans 24-39 (HKDKHKDREHRHKEHK). Over residues 40–110 (KDKDKDREKS…DAKIKKEKEN (71 aa)) the composition is skewed to basic and acidic residues. At Ser59 the chain carries Phosphoserine. A Glycyl lysine isopeptide (Lys-Gly) (interchain with G-Cter in SUMO2) cross-link involves residue Lys103. Residue Lys105 forms a Glycyl lysine isopeptide (Lys-Gly) (interchain with G-Cter in SUMO); alternate linkage. A Glycyl lysine isopeptide (Lys-Gly) (interchain with G-Cter in SUMO2); alternate cross-link involves residue Lys105. Phosphoserine is present on Ser114. Residue Lys119 forms a Glycyl lysine isopeptide (Lys-Gly) (interchain with G-Cter in SUMO); alternate linkage. Residue Lys119 forms a Glycyl lysine isopeptide (Lys-Gly) (interchain with G-Cter in SUMO2); alternate linkage. Lys119 participates in a covalent cross-link: Glycyl lysine isopeptide (Lys-Gly) (interchain with G-Cter in SUMO1); alternate. The segment covering 131–168 (PKEDIKPLKRPRDEDDADYKPKKIKTEDIKKEKKRKLE) has biased composition (basic and acidic residues). Residues Lys136 and Lys150 each participate in a glycyl lysine isopeptide (Lys-Gly) (interchain with G-Cter in SUMO2) cross-link. Residue Lys155 forms a Glycyl lysine isopeptide (Lys-Gly) (interchain with G-Cter in SUMO); alternate linkage. A Glycyl lysine isopeptide (Lys-Gly) (interchain with G-Cter in SUMO2); alternate cross-link involves residue Lys155. Glycyl lysine isopeptide (Lys-Gly) (interchain with G-Cter in SUMO2) cross-links involve residues Lys160 and Lys166. Lys174 is covalently cross-linked (Glycyl lysine isopeptide (Lys-Gly) (interchain with G-Cter in SUMO2); alternate). The residue at position 174 (Lys174) is an N6-acetyllysine; alternate. A compositionally biased stretch (basic and acidic residues) spans 181–200 (KDKDKKVAEPDNKKKKAKKE). Lys206 participates in a covalent cross-link: Glycyl lysine isopeptide (Lys-Gly) (interchain with G-Cter in SUMO2). Lys282 carries the N6-acetyllysine modification. Lys338 is covalently cross-linked (Glycyl lysine isopeptide (Lys-Gly) (interchain with G-Cter in SUMO2)). Interaction with DNA regions lie at residues 427–428 (KY) and 490–495 (RAGNEK). The Topo IB-type catalytic domain maps to 434-767 (SSRIKGEKDW…IDMTDEDYEF (334 aa)). At Ser508 the chain carries Phosphoserine; by CK2. Residue Lys551 forms a Glycyl lysine isopeptide (Lys-Gly) (interchain with G-Cter in SUMO2) linkage. The tract at residues 587–589 (TAK) is interaction with DNA. Residues Lys644, Lys702, and Lys714 each participate in a glycyl lysine isopeptide (Lys-Gly) (interchain with G-Cter in SUMO2) cross-link. Catalysis depends on Tyr725, which acts as the O-(3'-phospho-DNA)-tyrosine intermediate.

It belongs to the type IB topoisomerase family. As to quaternary structure, monomer. Interacts with ERCC6. Interacts with TPRN; TPRN interacts with a number of DNA damage response proteins, is recruited to sites of DNA damage and may play a role in DNA damage repair. In terms of processing, sumoylated. Lys-119 is the main site of sumoylation. Sumoylation plays a role in partitioning TOP1 between nucleoli and nucleoplasm. Levels are dramatically increased on camptothecin (CPT) treatment. Post-translationally, phosphorylation at Ser-508 by CK2 increases binding to supercoiled DNA and sensitivity to camptothecin.

It localises to the nucleus. Its subcellular location is the nucleolus. The protein localises to the nucleoplasm. It carries out the reaction ATP-independent breakage of single-stranded DNA, followed by passage and rejoining.. In terms of biological role, releases the supercoiling and torsional tension of DNA introduced during the DNA replication and transcription by transiently cleaving and rejoining one strand of the DNA duplex. Introduces a single-strand break via transesterification at a target site in duplex DNA. The scissile phosphodiester is attacked by the catalytic tyrosine of the enzyme, resulting in the formation of a DNA-(3'-phosphotyrosyl)-enzyme intermediate and the expulsion of a 5'-OH DNA strand. The free DNA strand then rotates around the intact phosphodiester bond on the opposing strand, thus removing DNA supercoils. Finally, in the religation step, the DNA 5'-OH attacks the covalent intermediate to expel the active-site tyrosine and restore the DNA phosphodiester backbone. Regulates the alternative splicing of tissue factor (F3) pre-mRNA in endothelial cells. Involved in the circadian transcription of the core circadian clock component BMAL1 by altering the chromatin structure around the ROR response elements (ROREs) on the BMAL1 promoter. The sequence is that of DNA topoisomerase 1 (Top1) from Rattus norvegicus (Rat).